Consider the following 128-residue polypeptide: Large ribosomal subunit protein mL51 (128 aa).

The transit peptide at 1 to 31 (MAGNLLSGAGRRLWDWVPLACRSFSLGVPRL) directs the protein to the mitochondrion.

This sequence belongs to the mitochondrion-specific ribosomal protein mL51 family. Component of the mitochondrial large ribosomal subunit (mt-LSU). Mature mammalian 55S mitochondrial ribosomes consist of a small (28S) and a large (39S) subunit. The 28S small subunit contains a 12S ribosomal RNA (12S mt-rRNA) and 30 different proteins. The 39S large subunit contains a 16S rRNA (16S mt-rRNA), a copy of mitochondrial valine transfer RNA (mt-tRNA(Val)), which plays an integral structural role, and 52 different proteins. Interacts with OXA1L.

Its subcellular location is the mitochondrion. This is Large ribosomal subunit protein mL51 (MRPL51) from Homo sapiens (Human).